An 830-amino-acid chain; its full sequence is Leucine--tRNA ligase (830 aa).

Positions 34–44 (PYPSGNIHMGH) match the 'HIGH' region motif. The 'KMSKS' region motif lies at 592-596 (KMSKS). An ATP-binding site is contributed by Lys-595.

Belongs to the class-I aminoacyl-tRNA synthetase family.

The protein localises to the cytoplasm. It carries out the reaction tRNA(Leu) + L-leucine + ATP = L-leucyl-tRNA(Leu) + AMP + diphosphate. The chain is Leucine--tRNA ligase from Ehrlichia ruminantium (strain Welgevonden).